Here is a 319-residue protein sequence, read N- to C-terminus: Transcription elongation factor A protein 1 (319 aa).

A TFIIS N-terminal domain is found at 1 to 78 (MQEIIKCREQ…DKWKQDIEGT (78 aa)). Over residues 78–106 (TSATTTSSSSSSSSSTTSTTTTKTASPSE) the composition is skewed to low complexity. Residues 78 to 146 (TSATTTSSSS…TTPKTSSPPI (69 aa)) are disordered. Positions 107 to 122 (SLKRKSISEDTSDRPT) are enriched in basic and acidic residues. Residues 133 to 146 (ISPPTTPKTSSPPI) are compositionally biased toward low complexity. Positions 160 to 272 (LRNKTIQLFV…ASMLGQNNEA (113 aa)) constitute a TFIIS central domain. A TFIIS-type zinc finger spans residues 275–317 (DQFQCGKCKQRKCTYTQLQTRSADEPPTTFVKCCVKGCGNRWR). 4 residues coordinate Zn(2+): C279, C282, C307, and C312.

This sequence belongs to the TFS-II family.

It is found in the nucleus. Its function is as follows. Necessary for efficient RNA polymerase II transcription elongation past template-encoded arresting sites. The arresting sites in DNA have the property of trapping a certain fraction of elongating RNA polymerases that pass through, resulting in locked ternary complexes. Cleavage of the nascent transcript by S-II allows the resumption of elongation from the new 3'-terminus. This chain is Transcription elongation factor A protein 1 (tcea1), found in Dictyostelium discoideum (Social amoeba).